A 329-amino-acid polypeptide reads, in one-letter code: (+)-eremophilene synthase (329 aa).

2 residues coordinate Mg(2+): Asp-91 and Glu-96. The DDXXD motif motif lies at 91-95 (DDAYD). Residue Arg-185 participates in substrate binding. Residues Asn-231 and Ser-235 each coordinate Mg(2+). Lys-238 provides a ligand contact to substrate. Glu-239 contributes to the Mg(2+) binding site. 317–318 (RY) is a binding site for substrate.

The protein belongs to the terpene synthase family. It depends on Mg(2+) as a cofactor.

The catalysed reaction is (2E,6E)-farnesyl diphosphate = (+)-eremophilene + diphosphate. It functions in the pathway secondary metabolite biosynthesis; terpenoid biosynthesis. Its function is as follows. Catalyzes the conversion of (2E,6E)-farnesyl diphosphate (FPP) to yield the bicyclic sesquiterpene eremophilene via a 1,10-cyclization, which requires the abstraction of the pyrophosphate from FPP to yield the (E,E)-germacradienyl cation. The only accepted substrate is farnesyl diphosphate (FPP). The chain is (+)-eremophilene synthase from Sorangium cellulosum (strain So ce56) (Polyangium cellulosum (strain So ce56)).